The chain runs to 323 residues: Fructose-bisphosphate aldolase (323 aa).

Position 50 (Ser-50) interacts with beta-D-fructose 1,6-bisphosphate. Asp-83 (proton donor) is an active-site residue. Positions 84 and 178 each coordinate Zn(2+). The beta-D-fructose 1,6-bisphosphate site is built by His-178, Gly-179, and Lys-182. Residue His-210 participates in Zn(2+) binding. Beta-D-fructose 1,6-bisphosphate contacts are provided by Gly-211, Ser-213, Asn-253, Asp-255, Ser-256, Arg-259, and Arg-280.

It belongs to the class II fructose-bisphosphate aldolase family. Homodimer. The cofactor is Zn(2+).

It carries out the reaction beta-D-fructose 1,6-bisphosphate = D-glyceraldehyde 3-phosphate + dihydroxyacetone phosphate. Its pathway is carbohydrate degradation; glycolysis; D-glyceraldehyde 3-phosphate and glycerone phosphate from D-glucose: step 4/4. Functionally, plays a key role in glycolysis by catalyzing the cleavage of fructose 1,6-bisphosphate into dihydroxyacetone phosphate and glyceraldehyde 3-phosphate. Does not cleave D-tagatose-1,6-bisphosphate. The polypeptide is Fructose-bisphosphate aldolase (Giardia intestinalis (strain ATCC 50803 / WB clone C6) (Giardia lamblia)).